The chain runs to 424 residues: Dihydrolipoyllysine-residue succinyltransferase component of 2-oxoglutarate dehydrogenase complex (424 aa).

Residues 1-76 (MPEVKVPELA…EVGQAIAVVG (76 aa)) form the Lipoyl-binding domain. Lys-42 bears the N6-lipoyllysine mark. 2 disordered regions span residues 76–138 (GEGS…KYAR) and 155–204 (VRKE…RKKT). The segment covering 91 to 105 (EAPKQETETSTDDKS) has biased composition (basic and acidic residues). Over residues 122–131 (DNNQRVNATP) the composition is skewed to polar residues. Positions 128 to 164 (NATPSARKYAREKGIDLSEIAAASNDVVRKEHVDQSQ) constitute a Peripheral subunit-binding (PSBD) domain. The segment covering 162–176 (QSQTQTSTQQQAQPA) has biased composition (low complexity). Catalysis depends on residues His-395 and Asp-399.

The protein belongs to the 2-oxoacid dehydrogenase family. Forms a 24-polypeptide structural core with octahedral symmetry. Part of the 2-oxoglutarate dehydrogenase (OGDH) complex composed of E1 (2-oxoglutarate dehydrogenase), E2 (dihydrolipoamide succinyltransferase) and E3 (dihydrolipoamide dehydrogenase); the complex contains multiple copies of the three enzymatic components (E1, E2 and E3). It depends on (R)-lipoate as a cofactor.

The enzyme catalyses N(6)-[(R)-dihydrolipoyl]-L-lysyl-[protein] + succinyl-CoA = N(6)-[(R)-S(8)-succinyldihydrolipoyl]-L-lysyl-[protein] + CoA. Its pathway is amino-acid degradation; L-lysine degradation via saccharopine pathway; glutaryl-CoA from L-lysine: step 6/6. E2 component of the 2-oxoglutarate dehydrogenase (OGDH) complex which catalyzes the second step in the conversion of 2-oxoglutarate to succinyl-CoA and CO(2). In Staphylococcus saprophyticus subsp. saprophyticus (strain ATCC 15305 / DSM 20229 / NCIMB 8711 / NCTC 7292 / S-41), this protein is Dihydrolipoyllysine-residue succinyltransferase component of 2-oxoglutarate dehydrogenase complex (odhB).